A 255-amino-acid polypeptide reads, in one-letter code: Putative keratin-87 protein (255 aa).

Residues 1–255 form the IF rod domain; the sequence is MEANSGRLAS…SRGCVRALVL (255 aa). Coiled-coil stretches lie at residues 19 to 81 and 147 to 227; these read LEGY…EIRV and LRRT…VMNS.

Belongs to the intermediate filament family. Heterotetramer of two type I and two type II keratins.

This chain is Putative keratin-87 protein (KRT87P), found in Homo sapiens (Human).